The following is a 282-amino-acid chain: Type 1 encapsulin shell protein (282 aa).

This sequence belongs to the encapsulin family. Family 1 subfamily. In terms of assembly, initially thought to form a 180 subunit shell. Forms hollow shells composed of 240 subunits, making a shell about 42-43 nm in diameter. The monomer is capable of assuming 4 different conformations which allows packaging into the icosahedron. The shell has 12 pentameric and 30 hexameric capsomers which form the vertices and faces of the icosahedral nanocompartment.

It is found in the encapsulin nanocompartment. Functionally, shell component of a type 1 encapsulin nanocompartment. Assembles into proteinaceous icosahedral shells 42-43 nm in diameter with an iron- and phosphorus-rich core (1Fe:1.1P) which can store over 23,000-35,000 iron atoms (with a calculated maximum of 83,000 Fe). There are 2 types of negatively charged open pores in the cryo-electron structure; a 3-fold pore where 3 hexamers meet with a minimal size of 7.2 Angstroms and a 5-fold pore where pentamers meet with a minimal size of 2.3 Angstroms. The 2-fold pore seen in other encapsulin nanocompartments is closed. Empty compartments can be generated in E.coli. Both types of pore have extra density in their centers in the structure. 2 different cargo proteins have been identified (IMEF and Fer); when both are expressed in E.coli with the shell protein only IMEF is detected within the nanocompartment. E.coli expressing all 3 genes stores the largest amount of iron and is protected from Fe/H2O2-induced oxidative stress. Part of the iron-mineralizing encapsulin-associated Firmicute (IMEF) system. This is Type 1 encapsulin shell protein from Bacillus thermotolerans (Quasibacillus thermotolerans).